The following is a 211-amino-acid chain: 3-demethoxyubiquinol 3-hydroxylase (211 aa).

E60, E90, H93, E142, E174, and H177 together coordinate Fe cation.

This sequence belongs to the COQ7 family. Requires Fe cation as cofactor.

It localises to the cell membrane. It catalyses the reaction a 5-methoxy-2-methyl-3-(all-trans-polyprenyl)benzene-1,4-diol + AH2 + O2 = a 3-demethylubiquinol + A + H2O. It functions in the pathway cofactor biosynthesis; ubiquinone biosynthesis. Functionally, catalyzes the hydroxylation of 2-nonaprenyl-3-methyl-6-methoxy-1,4-benzoquinol during ubiquinone biosynthesis. This Francisella tularensis subsp. holarctica (strain FTNF002-00 / FTA) protein is 3-demethoxyubiquinol 3-hydroxylase.